We begin with the raw amino-acid sequence, 666 residues long: UvrABC system protein B (666 aa).

Positions 26–183 (DSFQKGAEKV…RKLLHIQYNR (158 aa)) constitute a Helicase ATP-binding domain. 39 to 46 (GVTGSGKT) serves as a coordination point for ATP. The short motif at 92 to 115 (YYDYYQPEAYVPSSDTFIEKDSSI) is the Beta-hairpin element. The 163-residue stretch at 429–591 (QIEDLLVEIR…ITPLTIRKEV (163 aa)) folds into the Helicase C-terminal domain. Residues 625–660 (EVLKDKLREEMMKAAKELDFERAAILRDKMLSIQIN) form the UVR domain.

The protein belongs to the UvrB family. As to quaternary structure, forms a heterotetramer with UvrA during the search for lesions. Interacts with UvrC in an incision complex.

It is found in the cytoplasm. In terms of biological role, the UvrABC repair system catalyzes the recognition and processing of DNA lesions. A damage recognition complex composed of 2 UvrA and 2 UvrB subunits scans DNA for abnormalities. Upon binding of the UvrA(2)B(2) complex to a putative damaged site, the DNA wraps around one UvrB monomer. DNA wrap is dependent on ATP binding by UvrB and probably causes local melting of the DNA helix, facilitating insertion of UvrB beta-hairpin between the DNA strands. Then UvrB probes one DNA strand for the presence of a lesion. If a lesion is found the UvrA subunits dissociate and the UvrB-DNA preincision complex is formed. This complex is subsequently bound by UvrC and the second UvrB is released. If no lesion is found, the DNA wraps around the other UvrB subunit that will check the other stand for damage. This is UvrABC system protein B from Leptospira borgpetersenii serovar Hardjo-bovis (strain JB197).